Here is a 281-residue protein sequence, read N- to C-terminus: Cytochrome c oxidase subunit 3 (281 aa).

A run of 7 helical transmembrane segments spans residues 34–54, 59–79, 103–123, 148–168, 179–199, 220–240, and 259–279; these read PWPI…VMTF, NGLF…TLWF, GFVL…WAFF, WEVP…VTYA, VIYG…FQGF, ATGF…VGLF, and ILYW…VYWW.

Belongs to the cytochrome c oxidase subunit 3 family. In terms of assembly, component of the cytochrome c oxidase (complex IV, CIV), a multisubunit enzyme composed of a catalytic core of 3 subunits and several supernumerary subunits. The complex exists as a monomer or a dimer and forms supercomplexes (SCs) in the inner mitochondrial membrane with ubiquinol-cytochrome c oxidoreductase (cytochrome b-c1 complex, complex III, CIII).

Its subcellular location is the mitochondrion inner membrane. The enzyme catalyses 4 Fe(II)-[cytochrome c] + O2 + 8 H(+)(in) = 4 Fe(III)-[cytochrome c] + 2 H2O + 4 H(+)(out). Its function is as follows. Component of the cytochrome c oxidase, the last enzyme in the mitochondrial electron transport chain which drives oxidative phosphorylation. The respiratory chain contains 3 multisubunit complexes succinate dehydrogenase (complex II, CII), ubiquinol-cytochrome c oxidoreductase (cytochrome b-c1 complex, complex III, CIII) and cytochrome c oxidase (complex IV, CIV), that cooperate to transfer electrons derived from NADH and succinate to molecular oxygen, creating an electrochemical gradient over the inner membrane that drives transmembrane transport and the ATP synthase. Cytochrome c oxidase is the component of the respiratory chain that catalyzes the reduction of oxygen to water. Electrons originating from reduced cytochrome c in the intermembrane space (IMS) are transferred via the dinuclear copper A center (CU(A)) of subunit 2 and heme A of subunit 1 to the active site in subunit 1, a binuclear center (BNC) formed by heme A3 and copper B (CU(B)). The BNC reduces molecular oxygen to 2 water molecules using 4 electrons from cytochrome c in the IMS and 4 protons from the mitochondrial matrix. The polypeptide is Cytochrome c oxidase subunit 3 (COX3) (Rhizopus stolonifer (Rhizopus nigricans)).